Consider the following 27-residue polypeptide: Vasotocin-neurophysin VT (27 aa).

C1 and C6 are oxidised to a cystine. G9 carries the post-translational modification Glycine amide.

Belongs to the vasopressin/oxytocin family.

In terms of biological role, vasotocin is an antidiuretic hormone. In Sclerophrys regularis (Common African toad), this protein is Vasotocin-neurophysin VT.